Here is a 259-residue protein sequence, read N- to C-terminus: tRNA pseudouridine synthase A (259 aa).

Residue Asp51 is the Nucleophile of the active site. Tyr109 is a substrate binding site.

This sequence belongs to the tRNA pseudouridine synthase TruA family. As to quaternary structure, homodimer.

It catalyses the reaction uridine(38/39/40) in tRNA = pseudouridine(38/39/40) in tRNA. Functionally, formation of pseudouridine at positions 38, 39 and 40 in the anticodon stem and loop of transfer RNAs. This is tRNA pseudouridine synthase A from Nitrosococcus oceani (strain ATCC 19707 / BCRC 17464 / JCM 30415 / NCIMB 11848 / C-107).